The primary structure comprises 412 residues: DNA replication and repair protein RecF (412 aa).

Residue 30–37 (GANGAGKT) participates in ATP binding. The interval 369-412 (LQVRPGGGTAAVTPDPEYARGEATAANGAASAPTGADAASTSRD) is disordered. Low complexity predominate over residues 389–412 (GEATAANGAASAPTGADAASTSRD).

This sequence belongs to the RecF family.

Its subcellular location is the cytoplasm. Its function is as follows. The RecF protein is involved in DNA metabolism; it is required for DNA replication and normal SOS inducibility. RecF binds preferentially to single-stranded, linear DNA. It also seems to bind ATP. In Salinibacter ruber (strain DSM 13855 / M31), this protein is DNA replication and repair protein RecF.